Reading from the N-terminus, the 892-residue chain is Translation initiation factor IF-2 (892 aa).

The segment at 88 to 304 is disordered; sequence KKRTFVKRDP…SSLQQGFQKP (217 aa). Composition is skewed to basic and acidic residues over residues 93–159 and 166–216; these read VKRD…KDKV and DMTK…EENK. Positions 254–269 are enriched in basic residues; that stretch reads GRGRNAKAARPAKKGK. A compositionally biased stretch (basic and acidic residues) spans 270–282; that stretch reads HAESKADREEARA. A tr-type G domain is found at 391 to 560; that stretch reads PRAPVVTIMG…LLQAEVLELK (170 aa). The tract at residues 400 to 407 is G1; sequence GHVDHGKT. Residue 400–407 coordinates GTP; that stretch reads GHVDHGKT. Residues 425–429 are G2; that stretch reads GITQH. The tract at residues 446-449 is G3; it reads DTPG. GTP is bound by residues 446 to 450 and 500 to 503; these read DTPGH and NKID. The tract at residues 500–503 is G4; that stretch reads NKID. The interval 536–538 is G5; sequence SAK.

It belongs to the TRAFAC class translation factor GTPase superfamily. Classic translation factor GTPase family. IF-2 subfamily.

The protein localises to the cytoplasm. In terms of biological role, one of the essential components for the initiation of protein synthesis. Protects formylmethionyl-tRNA from spontaneous hydrolysis and promotes its binding to the 30S ribosomal subunits. Also involved in the hydrolysis of GTP during the formation of the 70S ribosomal complex. This Salmonella choleraesuis (strain SC-B67) protein is Translation initiation factor IF-2.